A 368-amino-acid chain; its full sequence is Homoserine O-acetyltransferase (368 aa).

An AB hydrolase-1 domain is found at 41–352; it reads NVILITHALS…DYGHDSFLVE (312 aa). The active-site Nucleophile is the Ser-147. Arg-219 is a substrate binding site. Active-site residues include Asp-313 and His-346. Residue Asp-347 coordinates substrate.

This sequence belongs to the AB hydrolase superfamily. MetX family. In terms of assembly, homodimer.

It localises to the cytoplasm. The enzyme catalyses L-homoserine + acetyl-CoA = O-acetyl-L-homoserine + CoA. The protein operates within amino-acid biosynthesis; L-methionine biosynthesis via de novo pathway; O-acetyl-L-homoserine from L-homoserine: step 1/1. Its function is as follows. Transfers an acetyl group from acetyl-CoA to L-homoserine, forming acetyl-L-homoserine. This is Homoserine O-acetyltransferase from Nautilia profundicola (strain ATCC BAA-1463 / DSM 18972 / AmH).